Here is a 952-residue protein sequence, read N- to C-terminus: Respiratory burst oxidase homolog protein E (952 aa).

The Cytoplasmic segment spans residues 1–392; sequence MKLSPLSFST…QCLILDNWQR (392 aa). 2 EF-hand-like regions span residues 211–219 and 245–256; these read SKNGLLARD and RRQKLEKITKDE. 2 consecutive EF-hand domains span residues 268–303 and 312–347; these read SFDA…SASA and QAEE…RDAY. Ca(2+)-binding residues include aspartate 281, asparagine 283, aspartate 285, lysine 287, and glutamate 292. A helical membrane pass occupies residues 393 to 413; the sequence is SWVLLVWVMLMAILFVWKFLE. The Extracellular segment spans residues 414-475; sequence YREKAAFKVM…PFDDNINFHK (62 aa). Residues 431–587 form the Ferric oxidoreductase domain; it reads KGAAETLKLN…LLVVVYIMLI (157 aa). A helical membrane pass occupies residues 476–496; that stretch reads IIACAIAIGILVHAGTHLACD. At 497–531 the chain is on the cytoplasmic side; sequence FPRIINSSPEQFVLIASAFNGTKPTFKDLMTGAEG. A helical transmembrane segment spans residues 532–552; that stretch reads ITGISMVILTTIAFTLASTHF. The Extracellular segment spans residues 553–574; the sequence is RRNRVRLPAPLDRLTGFNAFWY. A helical membrane pass occupies residues 575 to 595; that stretch reads THHLLVVVYIMLIVHGTFLFF. Residues 596-603 are Cytoplasmic-facing; that stretch reads ADKWYQKT. The chain crosses the membrane as a helical span at residues 604 to 621; the sequence is TWMYISVPLVLYVAERSL. Over 622–750 the chain is Extracellular; it reads RACRSKHYSV…PYGAPAQDYR (129 aa). In terms of domain architecture, FAD-binding FR-type spans 626–748; the sequence is SKHYSVKILK…DGPYGAPAQD (123 aa). The helical transmembrane segment at 751–771 threads the bilayer; it reads SYDVLLLIGLGIGATPFISIL. At 772–952 the chain is on the cytoplasmic side; that stretch reads KDLLNNSRDE…TRFEFHKEHF (181 aa).

It belongs to the RBOH (TC 5.B.1.3) family. In terms of assembly, monomer and homodimer. As to expression, expressed in roots, inflorescences, leaves and stems.

It localises to the membrane. Calcium-dependent NADPH oxidase that generates superoxide. This chain is Respiratory burst oxidase homolog protein E (RBOHE), found in Arabidopsis thaliana (Mouse-ear cress).